The chain runs to 88 residues: UPF0297 protein GK2555 (88 aa).

It belongs to the UPF0297 family.

This chain is UPF0297 protein GK2555, found in Geobacillus kaustophilus (strain HTA426).